The following is a 129-amino-acid chain: MAKPKRIGKKREKKNIPVGVVHIQASFNNTIITFTDPRGNTISWASSGQSGFKGSRKSTPFAAQVAAEQAARRAQDNGMRTVGIYVKGPGSGRESAMRAINAVGFKVAFIRDITPIPHNGCRPPKRRRV.

Belongs to the universal ribosomal protein uS11 family. Part of the 30S ribosomal subunit. Interacts with proteins S7 and S18. Binds to IF-3.

In terms of biological role, located on the platform of the 30S subunit, it bridges several disparate RNA helices of the 16S rRNA. Forms part of the Shine-Dalgarno cleft in the 70S ribosome. In Lawsonia intracellularis (strain PHE/MN1-00), this protein is Small ribosomal subunit protein uS11.